A 308-amino-acid polypeptide reads, in one-letter code: GMP synthase [glutamine-hydrolyzing] subunit B (308 aa).

One can recognise a GMPS ATP-PPase domain in the interval 1-185 (MNWEKFVEEK…LGLPEKIYNR (185 aa)). 28–34 (SGGVDSS) lines the ATP pocket.

As to quaternary structure, heterodimer composed of a glutamine amidotransferase subunit (A) and a GMP-binding subunit (B).

The enzyme catalyses XMP + L-glutamine + ATP + H2O = GMP + L-glutamate + AMP + diphosphate + 2 H(+). It functions in the pathway purine metabolism; GMP biosynthesis; GMP from XMP (L-Gln route): step 1/1. Functionally, catalyzes the synthesis of GMP from XMP. The polypeptide is GMP synthase [glutamine-hydrolyzing] subunit B (guaAB) (Pyrococcus abyssi (strain GE5 / Orsay)).